A 236-amino-acid chain; its full sequence is Putative N-acetylmannosamine-6-phosphate 2-epimerase (236 aa).

The protein belongs to the NanE family.

The catalysed reaction is an N-acyl-D-glucosamine 6-phosphate = an N-acyl-D-mannosamine 6-phosphate. It participates in amino-sugar metabolism; N-acetylneuraminate degradation; D-fructose 6-phosphate from N-acetylneuraminate: step 3/5. Functionally, converts N-acetylmannosamine-6-phosphate (ManNAc-6-P) to N-acetylglucosamine-6-phosphate (GlcNAc-6-P). The chain is Putative N-acetylmannosamine-6-phosphate 2-epimerase from Listeria welshimeri serovar 6b (strain ATCC 35897 / DSM 20650 / CCUG 15529 / CIP 8149 / NCTC 11857 / SLCC 5334 / V8).